The chain runs to 610 residues: Butyryl-CoA dehydrogenase Swol_1933 (610 aa).

Residue Glu451 is the Proton acceptor of the active site.

It belongs to the acyl-CoA dehydrogenase family. FAD is required as a cofactor.

It is found in the cytoplasm. The catalysed reaction is butanoyl-CoA + oxidized [electron-transfer flavoprotein] + H(+) = (2E)-butenoyl-CoA + reduced [electron-transfer flavoprotein]. It carries out the reaction a short-chain 2,3-saturated fatty acyl-CoA + oxidized [electron-transfer flavoprotein] + H(+) = a short-chain (2E)-enoyl-CoA + reduced [electron-transfer flavoprotein]. The protein operates within lipid metabolism; butanoate metabolism. Involved in syntrophic growth of S.wolfei with butyrate, as part of the butyrate oxidation pathway. Catalyzes the oxidation of butanoyl-CoA to crotonyl-CoA. Probably passes the electrons released by this reaction on to electron-transfer flavoproteins (EtfAB) to finally generate hydrogen and/or formate. The polypeptide is Butyryl-CoA dehydrogenase Swol_1933 (Syntrophomonas wolfei subsp. wolfei (strain DSM 2245B / Goettingen)).